Reading from the N-terminus, the 280-residue chain is Large ribosomal subunit protein uL2 (280 aa).

Positions 226–280 (NPIDHPHGGGEGRTSGGRHPVTPWGKPTKGAKTRNKKKASSQLIIRSRHAKKKGR) are disordered. Composition is skewed to basic residues over residues 254 to 264 (KGAKTRNKKKA) and 271 to 280 (RSRHAKKKGR).

Belongs to the universal ribosomal protein uL2 family. In terms of assembly, part of the 50S ribosomal subunit. Forms a bridge to the 30S subunit in the 70S ribosome.

In terms of biological role, one of the primary rRNA binding proteins. Required for association of the 30S and 50S subunits to form the 70S ribosome, for tRNA binding and peptide bond formation. It has been suggested to have peptidyltransferase activity; this is somewhat controversial. Makes several contacts with the 16S rRNA in the 70S ribosome. The protein is Large ribosomal subunit protein uL2 of Roseobacter denitrificans (strain ATCC 33942 / OCh 114) (Erythrobacter sp. (strain OCh 114)).